Reading from the N-terminus, the 222-residue chain is Ribonuclease 3 (222 aa).

The 123-residue stretch at 5-127 folds into the RNase III domain; sequence PIKLEKKLKL…LIGAIYLDKG (123 aa). E41 serves as a coordination point for Mg(2+). The active site involves D45. Positions 113 and 116 each coordinate Mg(2+). E116 is a catalytic residue. The DRBM domain maps to 152-221; sequence DAKTKLQEYS…ASLCLQDIFK (70 aa).

Belongs to the ribonuclease III family. In terms of assembly, homodimer. Requires Mg(2+) as cofactor.

Its subcellular location is the cytoplasm. It catalyses the reaction Endonucleolytic cleavage to 5'-phosphomonoester.. Digests double-stranded RNA. Involved in the processing of primary rRNA transcript to yield the immediate precursors to the large and small rRNAs (23S and 16S). Processes some mRNAs, and tRNAs when they are encoded in the rRNA operon. Processes pre-crRNA and tracrRNA of type II CRISPR loci if present in the organism. This chain is Ribonuclease 3, found in Pelagibacter ubique (strain HTCC1062).